Reading from the N-terminus, the 173-residue chain is Crossover junction endodeoxyribonuclease RuvC (173 aa).

Catalysis depends on residues Asp8, Glu67, and Asp139. Residues Asp8, Glu67, and Asp139 each coordinate Mg(2+).

The protein belongs to the RuvC family. In terms of assembly, homodimer which binds Holliday junction (HJ) DNA. The HJ becomes 2-fold symmetrical on binding to RuvC with unstacked arms; it has a different conformation from HJ DNA in complex with RuvA. In the full resolvosome a probable DNA-RuvA(4)-RuvB(12)-RuvC(2) complex forms which resolves the HJ. Mg(2+) serves as cofactor.

The protein localises to the cytoplasm. The catalysed reaction is Endonucleolytic cleavage at a junction such as a reciprocal single-stranded crossover between two homologous DNA duplexes (Holliday junction).. In terms of biological role, the RuvA-RuvB-RuvC complex processes Holliday junction (HJ) DNA during genetic recombination and DNA repair. Endonuclease that resolves HJ intermediates. Cleaves cruciform DNA by making single-stranded nicks across the HJ at symmetrical positions within the homologous arms, yielding a 5'-phosphate and a 3'-hydroxyl group; requires a central core of homology in the junction. The consensus cleavage sequence is 5'-(A/T)TT(C/G)-3'. Cleavage occurs on the 3'-side of the TT dinucleotide at the point of strand exchange. HJ branch migration catalyzed by RuvA-RuvB allows RuvC to scan DNA until it finds its consensus sequence, where it cleaves and resolves the cruciform DNA. The protein is Crossover junction endodeoxyribonuclease RuvC of Serratia proteamaculans (strain 568).